Consider the following 427-residue polypeptide: Trigger factor (427 aa).

Residues 163–248 form the PPIase FKBP-type domain; that stretch reads GDTVVIDFVG…IHEVKAKEVP (86 aa).

It belongs to the FKBP-type PPIase family. Tig subfamily.

It localises to the cytoplasm. It catalyses the reaction [protein]-peptidylproline (omega=180) = [protein]-peptidylproline (omega=0). Functionally, involved in protein export. Acts as a chaperone by maintaining the newly synthesized protein in an open conformation. Functions as a peptidyl-prolyl cis-trans isomerase. The sequence is that of Trigger factor from Streptococcus pneumoniae (strain JJA).